We begin with the raw amino-acid sequence, 397 residues long: MASLAVSINQFALEFSKKLAESAEGRNIFFSPWGISTALAMLYLGTKGTTADQMAQVLQFSSVEDFKSCPDSEKKRKMEFNSGKFEEIQSDFQTLAAEILKPGNSYVLKTANRIYGEKTYPFHNKYLEDMKTYFGAEPQSVNFVEASGQIRKEINSWVGSQTGGKIPNLLPDDSVDTKTKMVLVNALYFKGTWEHQFSVKNTTERPFRVNKTTSKPVQMMSMKQSLQVFHIEELQTIGLQLHYQNRDLSLLLLLPEAIDGLEQLERAITYEKLDKWTSADMMDTYEVQLYLPKFKMEESYDLKSALRGMGMTDVFSQSKADFSNMTSERNLFLSNVFHKTFLEINEEGTEAAAGTGSEISVRIKAPSIELNVDHPFLFFIRHNKTKSILFCGRFCSP.

Positions 74–77 (KKRK) match the Nuclear localization signal motif.

This sequence belongs to the serpin family. Ov-serpin subfamily.

The protein resides in the nucleus. It is found in the cytoplasm. Functionally, protease inhibitor that may play a role in the regulation of protease activities during hematopoiesis and apoptosis induced by TNF. May regulate protease activities in the cytoplasm and in the nucleus. In Mus musculus (Mouse), this protein is Serpin B10 (Serpinb10).